The chain runs to 209 residues: Ribosomal RNA small subunit methyltransferase G (209 aa).

Residues G72, L77, 123-124, and R138 contribute to the S-adenosyl-L-methionine site; that span reads AE.

The protein belongs to the methyltransferase superfamily. RNA methyltransferase RsmG family.

Its subcellular location is the cytoplasm. Specifically methylates the N7 position of guanine in position 518 of 16S rRNA. The chain is Ribosomal RNA small subunit methyltransferase G from Leifsonia xyli subsp. xyli (strain CTCB07).